Consider the following 70-residue polypeptide: NAD(P)H-quinone oxidoreductase subunit L (70 aa).

2 consecutive transmembrane segments (helical) span residues 2 to 22 (IVALLYLILAGAYLLVIPIAV) and 39 to 59 (LLMYFLVFFFFPGLLVLSPFA).

Belongs to the complex I NdhL subunit family. NDH-1 can be composed of about 15 different subunits; different subcomplexes with different compositions have been identified which probably have different functions.

The protein localises to the cellular thylakoid membrane. It carries out the reaction a plastoquinone + NADH + (n+1) H(+)(in) = a plastoquinol + NAD(+) + n H(+)(out). The catalysed reaction is a plastoquinone + NADPH + (n+1) H(+)(in) = a plastoquinol + NADP(+) + n H(+)(out). Its function is as follows. NDH-1 shuttles electrons from an unknown electron donor, via FMN and iron-sulfur (Fe-S) centers, to quinones in the respiratory and/or the photosynthetic chain. The immediate electron acceptor for the enzyme in this species is believed to be plastoquinone. Couples the redox reaction to proton translocation, and thus conserves the redox energy in a proton gradient. Cyanobacterial NDH-1 also plays a role in inorganic carbon-concentration. The polypeptide is NAD(P)H-quinone oxidoreductase subunit L (Nostoc punctiforme (strain ATCC 29133 / PCC 73102)).